The following is a 340-amino-acid chain: Glyceraldehyde-3-phosphate dehydrogenase (340 aa).

NAD(+)-binding positions include 11–12 and glycine 109; that span reads TI. D-glyceraldehyde 3-phosphate is bound at residue 138 to 140; that stretch reads SCN. The Nucleophile role is filled by cysteine 139. Residue arginine 167 coordinates NAD(+). 193–194 is a binding site for D-glyceraldehyde 3-phosphate; the sequence is HA. Glutamine 300 is an NAD(+) binding site.

The protein belongs to the glyceraldehyde-3-phosphate dehydrogenase family. As to quaternary structure, homotetramer.

It is found in the cytoplasm. It carries out the reaction D-glyceraldehyde 3-phosphate + phosphate + NADP(+) = (2R)-3-phospho-glyceroyl phosphate + NADPH + H(+). It catalyses the reaction D-glyceraldehyde 3-phosphate + phosphate + NAD(+) = (2R)-3-phospho-glyceroyl phosphate + NADH + H(+). Its pathway is carbohydrate degradation; glycolysis; pyruvate from D-glyceraldehyde 3-phosphate: step 1/5. The sequence is that of Glyceraldehyde-3-phosphate dehydrogenase from Saccharolobus islandicus (strain M.14.25 / Kamchatka #1) (Sulfolobus islandicus).